The following is a 721-amino-acid chain: Far upstream element-binding protein 2 (721 aa).

The disordered stretch occupies residues 1-148 (MSDYSTGGPP…HPPPRTSMTE (148 aa)). Ser2 is subject to N-acetylserine. Residues 8–17 (GPPPGPPPPA) show a composition bias toward pro residues. Composition is skewed to gly residues over residues 18–28 (GGGGGAAGAGG) and 36–69 (GAGD…GGPG). Arg40 carries the post-translational modification Omega-N-methylarginine. Residue Lys88 is modified to N6-acetyllysine. Thr101 is subject to Phosphothreonine. Basic and acidic residues predominate over residues 111–123 (RQLEDGDQPDSKK). Residue Lys122 forms a Glycyl lysine isopeptide (Lys-Gly) (interchain with G-Cter in SUMO1); alternate linkage. Residue Lys122 forms a Glycyl lysine isopeptide (Lys-Gly) (interchain with G-Cter in SUMO2); alternate linkage. Residues Ser126, Ser130, Ser182, Ser185, Ser194, and Ser275 each carry the phosphoserine modification. 3 consecutive KH domains span residues 145 to 209 (SMTE…KMML), 234 to 300 (GTVQ…CEMV), and 323 to 387 (GGGI…ARII). The interval 394–422 (LRSGPPGPPGAPGMPPGGRGRGRGQGNWG) is disordered. Over residues 398–408 (PPGPPGAPGMP) the composition is skewed to pro residues. Over residues 409–422 (PGGRGRGRGQGNWG) the composition is skewed to gly residues. Omega-N-methylarginine occurs at positions 412, 414, 416, and 443. In terms of domain architecture, KH 4 spans 425–492 (GGEMTFSIPT…QQIDHAKQLI (68 aa)). Position 481 is a phosphoserine (Ser481). The segment at 498–570 (GPLCPVGPGP…HDPNKAAAAA (73 aa)) is disordered. Composition is skewed to pro residues over residues 502–521 (PVGP…PFHP) and 529–543 (PGAP…PHQY). Repeat unit 1 spans residues 572–583 (DPNAAWAAYYSH). Residues 572–685 (DPNAAWAAYY…SAAWAEYYRQ (114 aa)) are 4 X 12 AA imperfect repeats. Pro residues predominate over residues 588–614 (PPGPVPGPAPAPAAPPAQGEPPQPPPT). Disordered stretches follow at residues 588–650 (PPGP…KAWE), 659–678 (VATG…YSAA), and 688–721 (AYYG…ELHL). Repeat copies occupy residues 618-629 (DYTKAWEEYYKK), 644-655 (DYTKAWEEYYKK), and 674-685 (DYSAAWAEYYRQ).

It belongs to the KHSRP family. In terms of assembly, part of a ternary complex containing FUBP2, PTBP1, PTBP2 and HNRPH1. Interacts with PARN. Interacts with PQBP1.

It is found in the nucleus. It localises to the cytoplasm. Part of a ternary complex that binds to the downstream control sequence (DCS) of the pre-mRNA. Mediates exon inclusion in transcripts that are subject to tissue-specific alternative splicing. May interact with single-stranded DNA from the far-upstream element (FUSE). May activate gene expression. Also involved in degradation of inherently unstable mRNAs that contain AU-rich elements (AREs) in their 3'-UTR, possibly by recruiting degradation machinery to ARE-containing mRNAs. Binds to the dendritic targeting element and may play a role in mRNA trafficking. This Rattus norvegicus (Rat) protein is Far upstream element-binding protein 2 (Khsrp).